The primary structure comprises 228 residues: Protein GlxC (228 aa).

It belongs to the FwdC/FmdC family.

In Rhizobium meliloti (strain 1021) (Ensifer meliloti), this protein is Protein GlxC (glxC).